Here is a 116-residue protein sequence, read N- to C-terminus: NADPH-dependent 7-cyano-7-deazaguanine reductase (116 aa).

C31 (thioimide intermediate) is an active-site residue. D38 (proton donor) is an active-site residue. Substrate contacts are provided by residues 53 to 55 (VEL) and 72 to 73 (YE).

Belongs to the GTP cyclohydrolase I family. QueF type 1 subfamily.

Its subcellular location is the cytoplasm. It carries out the reaction 7-aminomethyl-7-carbaguanine + 2 NADP(+) = 7-cyano-7-deazaguanine + 2 NADPH + 3 H(+). It functions in the pathway tRNA modification; tRNA-queuosine biosynthesis. Its function is as follows. Catalyzes the NADPH-dependent reduction of 7-cyano-7-deazaguanine (preQ0) to 7-aminomethyl-7-deazaguanine (preQ1). The protein is NADPH-dependent 7-cyano-7-deazaguanine reductase of Chloroherpeton thalassium (strain ATCC 35110 / GB-78).